Here is a 385-residue protein sequence, read N- to C-terminus: Pepsin A (385 aa).

The N-terminal stretch at 1 to 15 is a signal peptide; sequence MKWLLLLSLVVLSEC. Positions 16-59 are cleaved as a propeptide — activation peptide; the sequence is LVKVPLVRKKSLRQNLIKNGKLKDFLKTHKHNPASKYFPEAAAL. The 310-residue stretch at 73-382 folds into the Peptidase A1 domain; that stretch reads YFGTIGIGTP…DRANNKVGLA (310 aa). Aspartate 91 is a catalytic residue. An intrachain disulfide couples cysteine 104 to cysteine 109. Serine 127 is modified (phosphoserine). Cysteine 265 and cysteine 269 are oxidised to a cystine. Aspartate 274 is an active-site residue. Cysteines 308 and 341 form a disulfide.

This sequence belongs to the peptidase A1 family. Post-translationally, minor amounts of the active enzyme occur with 'Ala-58' at the amino end.

Its subcellular location is the secreted. It carries out the reaction Preferential cleavage: hydrophobic, preferably aromatic, residues in P1 and P1' positions. Cleaves 1-Phe-|-Val-2, 4-Gln-|-His-5, 13-Glu-|-Ala-14, 14-Ala-|-Leu-15, 15-Leu-|-Tyr-16, 16-Tyr-|-Leu-17, 23-Gly-|-Phe-24, 24-Phe-|-Phe-25 and 25-Phe-|-Tyr-26 bonds in the B chain of insulin.. Its function is as follows. Shows particularly broad specificity; although bonds involving phenylalanine and leucine are preferred, many others are also cleaved to some extent. The chain is Pepsin A (PGA) from Sus scrofa (Pig).